We begin with the raw amino-acid sequence, 701 residues long: Elongation factor G 1 (701 aa).

Residues 13 to 288 (KYTRNIGIMA…GVIDYLPSPL (276 aa)) enclose the tr-type G domain. GTP-binding positions include 22–29 (AHIDAGKT), 86–90 (DTPGH), and 140–143 (NKMD).

It belongs to the TRAFAC class translation factor GTPase superfamily. Classic translation factor GTPase family. EF-G/EF-2 subfamily.

It is found in the cytoplasm. In terms of biological role, catalyzes the GTP-dependent ribosomal translocation step during translation elongation. During this step, the ribosome changes from the pre-translocational (PRE) to the post-translocational (POST) state as the newly formed A-site-bound peptidyl-tRNA and P-site-bound deacylated tRNA move to the P and E sites, respectively. Catalyzes the coordinated movement of the two tRNA molecules, the mRNA and conformational changes in the ribosome. This chain is Elongation factor G 1, found in Bdellovibrio bacteriovorus (strain ATCC 15356 / DSM 50701 / NCIMB 9529 / HD100).